A 117-amino-acid chain; its full sequence is Small ribosomal subunit protein eS25 (117 aa).

Positions 1–34 are disordered; that stretch reads MPPKKDPKGGKAPPSKKKEGSGGGKAKKKKWSKG. The segment covering 25-34 has biased composition (basic residues); it reads KAKKKKWSKG.

Belongs to the eukaryotic ribosomal protein eS25 family.

The protein is Small ribosomal subunit protein eS25 (rps-25) of Caenorhabditis elegans.